A 258-amino-acid polypeptide reads, in one-letter code: Trypsin eta (258 aa).

The first 22 residues, 1–22, serve as a signal peptide directing secretion; that stretch reads MNKVILRILALLFLLGIGAVSA. The propeptide at 23-27 is activation peptide; the sequence is QPDGR. The Peptidase S1 domain occupies 28–258; sequence IVGGADTTNY…YFKDWIASRV (231 aa). Cysteines 59 and 75 form a disulfide. Active-site charge relay system residues include His74 and Asp120. Cystine bridges form between Cys185–Cys200 and Cys211–Cys235. Ser215 (charge relay system) is an active-site residue.

This sequence belongs to the peptidase S1 family.

The protein resides in the secreted. It is found in the extracellular space. It catalyses the reaction Preferential cleavage: Arg-|-Xaa, Lys-|-Xaa.. This chain is Trypsin eta (etaTry), found in Drosophila erecta (Fruit fly).